The sequence spans 156 residues: Arginine repressor (156 aa).

This sequence belongs to the ArgR family.

The protein localises to the cytoplasm. The protein operates within amino-acid biosynthesis; L-arginine biosynthesis [regulation]. In terms of biological role, regulates arginine biosynthesis genes. This chain is Arginine repressor, found in Escherichia fergusonii (strain ATCC 35469 / DSM 13698 / CCUG 18766 / IAM 14443 / JCM 21226 / LMG 7866 / NBRC 102419 / NCTC 12128 / CDC 0568-73).